The following is a 466-amino-acid chain: Cysteine--tRNA ligase (466 aa).

Residue Cys27 coordinates Zn(2+). The short motif at 29-39 is the 'HIGH' region element; it reads PTVYNYIHIGN. Residues Cys207, His232, and Glu236 each coordinate Zn(2+). The short motif at 264 to 268 is the 'KMSKS' region element; that stretch reads KMSKS. Residue Lys267 participates in ATP binding.

Belongs to the class-I aminoacyl-tRNA synthetase family. Monomer. Zn(2+) is required as a cofactor.

The protein resides in the cytoplasm. The catalysed reaction is tRNA(Cys) + L-cysteine + ATP = L-cysteinyl-tRNA(Cys) + AMP + diphosphate. This Thermoanaerobacter pseudethanolicus (strain ATCC 33223 / 39E) (Clostridium thermohydrosulfuricum) protein is Cysteine--tRNA ligase.